We begin with the raw amino-acid sequence, 359 residues long: DNA replication and repair protein RecF (359 aa).

ATP is bound at residue 30–37; the sequence is GANGSGKT.

This sequence belongs to the RecF family.

The protein localises to the cytoplasm. Functionally, the RecF protein is involved in DNA metabolism; it is required for DNA replication and normal SOS inducibility. RecF binds preferentially to single-stranded, linear DNA. It also seems to bind ATP. The chain is DNA replication and repair protein RecF from Vibrio atlanticus (strain LGP32) (Vibrio splendidus (strain Mel32)).